We begin with the raw amino-acid sequence, 377 residues long: Prostaglandin E synthase 2 (377 aa).

At 1-57 (MDPAARVVRALWPGGCALAWRLGGRPQPLLPTQSRAGFAGAAGGPSPVAAARKGSPR) the chain is on the lumenal side. Residues 58–74 (LLGAAALALGGALGLYH) traverse the membrane as a helical segment. The Cytoplasmic portion of the chain corresponds to 75-377 (TARWHLRAQD…RAITEASPAH (303 aa)). The 104-residue stretch at 90–193 (SAAQLSLSSR…EIITYYPAMK (104 aa)) folds into the Glutaredoxin domain. S95 carries the post-translational modification Phosphoserine. Glutathione is bound by residues V148 and 164–165 (DS). In terms of domain architecture, GST C-terminal spans 263–377 (YIVREGKFGA…RAITEASPAH (115 aa)).

Belongs to the GST superfamily. Homodimer. May interact with CEBPB. Interacts with EXOSC10. Synthesized as a Golgi membrane-associated protein, and the proteolytic removal of the N-terminal hydrophobic domain leads to the formation of a mature cytosolic enzyme. As to expression, widely expressed. Expressed in the heart, including apex, inter-ventricular septum, both atria and ventricles, but not in the aorta. Also expressed in fetal heart. Detected in various regions of the brain: cerebellum; occipital, frontal and parietal lobes. Also expressed in the lymph nodes, skeletal muscle, kidney and trachea, but not in the thymus or lung. Overexpressed in colorectal cancer.

It is found in the golgi apparatus membrane. The protein localises to the cytoplasm. The protein resides in the perinuclear region. It catalyses the reaction prostaglandin H2 = prostaglandin E2. It carries out the reaction prostaglandin H2 = (12S)-hydroxy-(5Z,8E,10E)-heptadecatrienoate + malonaldehyde. Its pathway is lipid metabolism; prostaglandin biosynthesis. With respect to regulation, isomerase activity is increased by sulfhydril compounds. Dithiothreitol (DTT) is most effective, followed by dihydrolipoic acid, glutathione (GSH) and 2-mercaptoethanol. Its function is as follows. Isomerase that catalyzes the conversion of PGH2 into the more stable prostaglandin E2 (PGE2) (in vitro). The biological function and the GSH-dependent property of PTGES2 is still under debate. In vivo, PTGES2 could form a complex with GSH and heme and would not participate in PGE2 synthesis but would catalyze the degradation of prostaglandin E2 H2 (PGH2) to 12(S)-hydroxy-5(Z),8(E),10(E)-heptadecatrienoic acid (HHT) and malondialdehyde (MDA). This chain is Prostaglandin E synthase 2 (PTGES2), found in Homo sapiens (Human).